Reading from the N-terminus, the 223-residue chain is uncharacterized protein (223 aa).

A disordered region spans residues 1–30 (MASATVRNVPLLDDDTIPFGEEDEMRDPSR). Residues 12–25 (LDDDTIPFGEEDEM) show a composition bias toward acidic residues. The next 4 membrane-spanning stretches (helical) occupy residues 35-55 (YTHP…ILIY), 56-76 (MFCG…VLFL), 129-149 (IFWL…LFAL), and 154-174 (FKWL…LYGY).

It belongs to the TVP23 family.

It is found in the membrane. This is an uncharacterized protein from Drosophila melanogaster (Fruit fly).